The following is a 419-amino-acid chain: Creatine kinase S-type, mitochondrial (419 aa).

The N-terminal 39 residues, Met-1–Ala-39, are a transit peptide targeting the mitochondrion. The segment at Ala-40–Met-64 is cardiolipin-binding. The Phosphagen kinase N-terminal domain maps to Lys-46 to Asn-132. In terms of domain architecture, Phosphagen kinase C-terminal spans Tyr-159–Leu-401. Residues Ser-162–Arg-166 and His-225 contribute to the ATP site. At Tyr-255 the chain carries Phosphotyrosine. Residues Arg-270, Arg-326, Arg-354–Val-359, and Asp-369 each bind ATP. Thr-356 is subject to Phosphothreonine.

The protein belongs to the ATP:guanido phosphotransferase family. As to quaternary structure, exists as an octamer composed of four CKMT2 homodimers.

It localises to the mitochondrion inner membrane. The enzyme catalyses creatine + ATP = N-phosphocreatine + ADP + H(+). Reversibly catalyzes the transfer of phosphate between ATP and various phosphogens (e.g. creatine phosphate). Creatine kinase isoenzymes play a central role in energy transduction in tissues with large, fluctuating energy demands, such as skeletal muscle, heart, brain and spermatozoa. This Bos taurus (Bovine) protein is Creatine kinase S-type, mitochondrial (CKMT2).